The chain runs to 558 residues: Adenine deaminase (558 aa).

This sequence belongs to the metallo-dependent hydrolases superfamily. Adenine deaminase family. Mn(2+) is required as a cofactor.

It carries out the reaction adenine + H2O + H(+) = hypoxanthine + NH4(+). The protein is Adenine deaminase of Methanoregula boonei (strain DSM 21154 / JCM 14090 / 6A8).